The sequence spans 267 residues: Outer membrane protein assembly factor BamD (267 aa).

The signal sequence occupies residues 1 to 16 (MKKILLTVSLGLALSA). A lipid anchor (N-palmitoyl cysteine) is attached at Cys-17. Cys-17 carries the S-diacylglycerol cysteine lipid modification.

It belongs to the BamD family. In terms of assembly, part of the Bam complex.

It is found in the cell outer membrane. Functionally, part of the outer membrane protein assembly complex, which is involved in assembly and insertion of beta-barrel proteins into the outer membrane. Required for efficient transformation of Neisseria gonorrhoeae by species-related DNA. The polypeptide is Outer membrane protein assembly factor BamD (Neisseria gonorrhoeae).